A 1217-amino-acid chain; its full sequence is ATP-dependent helicase/nuclease subunit A (1217 aa).

Positions 10 to 475 constitute a UvrD-like helicase ATP-binding domain; that stretch reads VIWTDAQWQS…IDLSQNFRSR (466 aa). Position 31–38 (31–38) interacts with ATP; the sequence is AAAGSGKT. The 311-residue stretch at 476–786 folds into the UvrD-like helicase C-terminal domain; that stretch reads KEVLSTTNYI…RMMTIHSSKG (311 aa).

Belongs to the helicase family. AddA subfamily. As to quaternary structure, heterodimer of AddA and AddB/RexB. Requires Mg(2+) as cofactor.

The enzyme catalyses Couples ATP hydrolysis with the unwinding of duplex DNA by translocating in the 3'-5' direction.. The catalysed reaction is ATP + H2O = ADP + phosphate + H(+). In terms of biological role, the heterodimer acts as both an ATP-dependent DNA helicase and an ATP-dependent, dual-direction single-stranded exonuclease. Recognizes the chi site generating a DNA molecule suitable for the initiation of homologous recombination. The AddA nuclease domain is required for chi fragment generation; this subunit has the helicase and 3' -&gt; 5' nuclease activities. The sequence is that of ATP-dependent helicase/nuclease subunit A from Staphylococcus aureus (strain MSSA476).